Consider the following 179-residue polypeptide: Large ribosomal subunit protein uL5 (179 aa).

It belongs to the universal ribosomal protein uL5 family. Part of the 50S ribosomal subunit; part of the 5S rRNA/L5/L18/L25 subcomplex. Contacts the 5S rRNA and the P site tRNA. Forms a bridge to the 30S subunit in the 70S ribosome.

In terms of biological role, this is one of the proteins that bind and probably mediate the attachment of the 5S RNA into the large ribosomal subunit, where it forms part of the central protuberance. In the 70S ribosome it contacts protein S13 of the 30S subunit (bridge B1b), connecting the 2 subunits; this bridge is implicated in subunit movement. Contacts the P site tRNA; the 5S rRNA and some of its associated proteins might help stabilize positioning of ribosome-bound tRNAs. The chain is Large ribosomal subunit protein uL5 from Francisella tularensis subsp. mediasiatica (strain FSC147).